A 188-amino-acid polypeptide reads, in one-letter code: Threonylcarbamoyl-AMP synthase (188 aa).

Residues Gln-3 to Gln-188 enclose the YrdC-like domain.

The protein belongs to the SUA5 family. TsaC subfamily.

Its subcellular location is the cytoplasm. The enzyme catalyses L-threonine + hydrogencarbonate + ATP = L-threonylcarbamoyladenylate + diphosphate + H2O. In terms of biological role, required for the formation of a threonylcarbamoyl group on adenosine at position 37 (t(6)A37) in tRNAs that read codons beginning with adenine. Catalyzes the conversion of L-threonine, HCO(3)(-)/CO(2) and ATP to give threonylcarbamoyl-AMP (TC-AMP) as the acyladenylate intermediate, with the release of diphosphate. This chain is Threonylcarbamoyl-AMP synthase, found in Shewanella denitrificans (strain OS217 / ATCC BAA-1090 / DSM 15013).